Consider the following 483-residue polypeptide: Isocitrate dehydrogenase [NADP] (483 aa).

An NADP(+)-binding site is contributed by Thr74. Residues Ser83, Asn85, Arg89, Arg99, and Arg121 each contribute to the D-threo-isocitrate site. Asp232 is a Mg(2+) binding site. Residues 264 to 270 and Asn277 contribute to the NADP(+) site; that span reads HGSAPDI.

This sequence belongs to the isocitrate and isopropylmalate dehydrogenases family. As to quaternary structure, homodimer. Mg(2+) is required as a cofactor. The cofactor is Mn(2+).

The catalysed reaction is D-threo-isocitrate + NADP(+) = 2-oxoglutarate + CO2 + NADPH. Functionally, catalyzes the oxidative decarboxylation of isocitrate to 2-oxoglutarate and carbon dioxide with the concomitant reduction of NADP(+). This is Isocitrate dehydrogenase [NADP] (icd) from Rickettsia bellii (strain RML369-C).